A 443-amino-acid polypeptide reads, in one-letter code: Probable glycine dehydrogenase (decarboxylating) subunit 1 (443 aa).

This sequence belongs to the GcvP family. N-terminal subunit subfamily. The glycine cleavage system is composed of four proteins: P, T, L and H. In this organism, the P 'protein' is a heterodimer of two subunits.

The catalysed reaction is N(6)-[(R)-lipoyl]-L-lysyl-[glycine-cleavage complex H protein] + glycine + H(+) = N(6)-[(R)-S(8)-aminomethyldihydrolipoyl]-L-lysyl-[glycine-cleavage complex H protein] + CO2. The glycine cleavage system catalyzes the degradation of glycine. The P protein binds the alpha-amino group of glycine through its pyridoxal phosphate cofactor; CO(2) is released and the remaining methylamine moiety is then transferred to the lipoamide cofactor of the H protein. This chain is Probable glycine dehydrogenase (decarboxylating) subunit 1, found in Nitratidesulfovibrio vulgaris (strain DSM 19637 / Miyazaki F) (Desulfovibrio vulgaris).